Here is a 349-residue protein sequence, read N- to C-terminus: Protein-glutamate methylesterase/protein-glutamine glutaminase (349 aa).

The 118-residue stretch at 5–122 folds into the Response regulatory domain; the sequence is RVLSVDDSAL…REGMLAYSEM (118 aa). At aspartate 56 the chain carries 4-aspartylphosphate. The CheB-type methylesterase domain maps to 152-344; that stretch reads LLSSEKLIAI…QQMLAKISAG (193 aa). Catalysis depends on residues serine 164, histidine 190, and aspartate 286.

Belongs to the CheB family. Post-translationally, phosphorylated by CheA. Phosphorylation of the N-terminal regulatory domain activates the methylesterase activity.

Its subcellular location is the cytoplasm. The catalysed reaction is [protein]-L-glutamate 5-O-methyl ester + H2O = L-glutamyl-[protein] + methanol + H(+). It carries out the reaction L-glutaminyl-[protein] + H2O = L-glutamyl-[protein] + NH4(+). Involved in chemotaxis. Part of a chemotaxis signal transduction system that modulates chemotaxis in response to various stimuli. Catalyzes the demethylation of specific methylglutamate residues introduced into the chemoreceptors (methyl-accepting chemotaxis proteins or MCP) by CheR. Also mediates the irreversible deamidation of specific glutamine residues to glutamic acid. The sequence is that of Protein-glutamate methylesterase/protein-glutamine glutaminase from Salmonella paratyphi A (strain ATCC 9150 / SARB42).